We begin with the raw amino-acid sequence, 511 residues long: Exodeoxyribonuclease 7 large subunit (511 aa).

Belongs to the XseA family. Heterooligomer composed of large and small subunits.

The protein localises to the cytoplasm. The catalysed reaction is Exonucleolytic cleavage in either 5'- to 3'- or 3'- to 5'-direction to yield nucleoside 5'-phosphates.. Its function is as follows. Bidirectionally degrades single-stranded DNA into large acid-insoluble oligonucleotides, which are then degraded further into small acid-soluble oligonucleotides. The polypeptide is Exodeoxyribonuclease 7 large subunit (Brucella melitensis biotype 1 (strain ATCC 23456 / CCUG 17765 / NCTC 10094 / 16M)).